Reading from the N-terminus, the 289-residue chain is 3-methyl-2-oxobutanoate hydroxymethyltransferase (289 aa).

2 residues coordinate Mg(2+): D50 and D89. 3-methyl-2-oxobutanoate is bound by residues 50–51, D89, and K119; that span reads DS. E121 is a Mg(2+) binding site. Residue E188 is the Proton acceptor of the active site. Residues 266–289 are disordered; sequence AQHSFGMPEDEQRRWEENVSGADD.

Belongs to the PanB family. In terms of assembly, homodecamer; pentamer of dimers. Mg(2+) is required as a cofactor.

The protein resides in the cytoplasm. The catalysed reaction is 3-methyl-2-oxobutanoate + (6R)-5,10-methylene-5,6,7,8-tetrahydrofolate + H2O = 2-dehydropantoate + (6S)-5,6,7,8-tetrahydrofolate. It functions in the pathway cofactor biosynthesis; (R)-pantothenate biosynthesis; (R)-pantoate from 3-methyl-2-oxobutanoate: step 1/2. Functionally, catalyzes the reversible reaction in which hydroxymethyl group from 5,10-methylenetetrahydrofolate is transferred onto alpha-ketoisovalerate to form ketopantoate. In Oleidesulfovibrio alaskensis (strain ATCC BAA-1058 / DSM 17464 / G20) (Desulfovibrio alaskensis), this protein is 3-methyl-2-oxobutanoate hydroxymethyltransferase.